A 154-amino-acid polypeptide reads, in one-letter code: 6,7-dimethyl-8-ribityllumazine synthase (154 aa).

5-amino-6-(D-ribitylamino)uracil contacts are provided by residues Phe26, 60–62 (ALE), and 84–86 (CII). Residue 89-90 (QT) participates in (2S)-2-hydroxy-3-oxobutyl phosphate binding. Catalysis depends on His92, which acts as the Proton donor. Asn117 is a binding site for 5-amino-6-(D-ribitylamino)uracil. Arg131 contacts (2S)-2-hydroxy-3-oxobutyl phosphate.

This sequence belongs to the DMRL synthase family.

The enzyme catalyses (2S)-2-hydroxy-3-oxobutyl phosphate + 5-amino-6-(D-ribitylamino)uracil = 6,7-dimethyl-8-(1-D-ribityl)lumazine + phosphate + 2 H2O + H(+). It participates in cofactor biosynthesis; riboflavin biosynthesis; riboflavin from 2-hydroxy-3-oxobutyl phosphate and 5-amino-6-(D-ribitylamino)uracil: step 1/2. Catalyzes the formation of 6,7-dimethyl-8-ribityllumazine by condensation of 5-amino-6-(D-ribitylamino)uracil with 3,4-dihydroxy-2-butanone 4-phosphate. This is the penultimate step in the biosynthesis of riboflavin. The polypeptide is 6,7-dimethyl-8-ribityllumazine synthase (Verminephrobacter eiseniae (strain EF01-2)).